A 515-amino-acid chain; its full sequence is Forkhead box protein H1 (515 aa).

Positions 55–103 are disordered; sequence YREGGTWSPDRGSMHGLSPGTQEGSCTQAEGTKDSLGGDETLSRKSKKK. A compositionally biased stretch (polar residues) spans 73 to 84; sequence PGTQEGSCTQAE. Residues 110–206 constitute a DNA-binding region (fork-head); the sequence is KPPYSYLAMI…MKLQNTALTR (97 aa). Residues 307–399 form a disordered region; that stretch reads YPQSKPTRNG…EPPKKMPLLS (93 aa). A compositionally biased stretch (low complexity) spans 322-339; it reads SASHSTYSSSSSSISTIS. Over residues 375 to 388 the composition is skewed to polar residues; that stretch reads STPSSDTDAGNYSP. The tract at residues 377–503 is SMAD-interaction domain (SID); it reads PSSDTDAGNY…PSFLGQCLGS (127 aa). A Fast/FoxH1 motif 1 (FM1) motif is present at residues 402-406; sequence LPTSY. Positions 412–418 match the Fast/FoxH1 motif 2 (FM2) motif; it reads PNVVAPP. The SMAD-interaction motif (SIM) motif lies at 467-488; that stretch reads LDNMLKTVPPNKSVFDVLTSHP.

In terms of assembly, ARF1 contains 2 smad2s, 1 smad4 and 1 foxh1/fast-1 protein. Interaction with smad4 is most likely indirect through interaction with the MH2 domain of smad2. Binds to the MH2 domain of smad3, which can incorporate into the ARF1 complex. The ARF1 and ARF2 complexes are activated by distinct TGF-beta family members; formation of ARF1 is promoted by activin. Interacts (via Fork-head domain) with gtf2ird1/wbscr11 (via repeats 4-5).

Its subcellular location is the nucleus. Its function is as follows. Transcriptional activator. Recognizes and binds to the DNA sequence 5'-TGT[GT][GT]ATT-3'. Upon TGF-beta induction, forms a transcriptionally active complex with smad2 and smad4 called activin-responsive factor 1 (ARF1), which binds a site on the mix-B/mix.2 promoter called the activin response element (ARE). Binds to activated smads and the ARE with much lower affinity than fast3. Necessary for the first steps in mesoderm specification, directly inducing mesodermal genes. Acts with fast3 to control the convergent extension movements of gastrulation. Binds to the proximal element (PE) of the gsc gene and cooperates with gtf2ird1/wbscr11 and SMAD proteins to regulate gsc transcription. The chain is Forkhead box protein H1 from Xenopus tropicalis (Western clawed frog).